The sequence spans 371 residues: Flagellar P-ring protein (371 aa).

The N-terminal stretch at 1–21 (MSRSFFATVLGLALAAMTVMA) is a signal peptide.

This sequence belongs to the FlgI family. The basal body constitutes a major portion of the flagellar organelle and consists of four rings (L,P,S, and M) mounted on a central rod.

It is found in the periplasm. It localises to the bacterial flagellum basal body. Its function is as follows. Assembles around the rod to form the L-ring and probably protects the motor/basal body from shearing forces during rotation. The protein is Flagellar P-ring protein of Caulobacter sp. (strain K31).